Reading from the N-terminus, the 170-residue chain is Acireductone dioxygenase (170 aa).

Positions 99, 101, 105, and 144 each coordinate Fe(2+). The Ni(2+) site is built by His-99, His-101, Glu-105, and His-144.

Belongs to the acireductone dioxygenase (ARD) family. As to quaternary structure, monomer. It depends on Fe(2+) as a cofactor. Ni(2+) serves as cofactor.

The enzyme catalyses 1,2-dihydroxy-5-(methylsulfanyl)pent-1-en-3-one + O2 = 3-(methylsulfanyl)propanoate + CO + formate + 2 H(+). It carries out the reaction 1,2-dihydroxy-5-(methylsulfanyl)pent-1-en-3-one + O2 = 4-methylsulfanyl-2-oxobutanoate + formate + 2 H(+). Its pathway is amino-acid biosynthesis; L-methionine biosynthesis via salvage pathway; L-methionine from S-methyl-5-thio-alpha-D-ribose 1-phosphate: step 5/6. Catalyzes 2 different reactions between oxygen and the acireductone 1,2-dihydroxy-3-keto-5-methylthiopentene (DHK-MTPene) depending upon the metal bound in the active site. Fe-containing acireductone dioxygenase (Fe-ARD) produces formate and 2-keto-4-methylthiobutyrate (KMTB), the alpha-ketoacid precursor of methionine in the methionine recycle pathway. Ni-containing acireductone dioxygenase (Ni-ARD) produces methylthiopropionate, carbon monoxide and formate, and does not lie on the methionine recycle pathway. The chain is Acireductone dioxygenase from Bacillus thuringiensis (strain Al Hakam).